Here is a 358-residue protein sequence, read N- to C-terminus: Acetylxylan esterase / glucomannan deacetylase (358 aa).

An N-terminal signal peptide occupies residues 1–18 (MKLLFPILLLTGSYFLSA). C19 carries the N-palmitoyl cysteine lipid modification. C19 carries the S-diacylglycerol cysteine lipid modification. Catalysis depends on S160, which acts as the Nucleophile. Catalysis depends on charge relay system residues D333 and H335.

Belongs to the carbohydrate esterase 2 (CE2) family.

The protein localises to the cell membrane. The enzyme catalyses Deacetylation of xylans and xylo-oligosaccharides.. It participates in glycan degradation; xylan degradation. In terms of biological role, involved in the degradation of plant cell wall polysaccharides. Catalyzes the deacetylation of acetylated birchwood xylan and glucomannan, with equal efficiency, and of the synthetic substrate 4-nitrophenyl acetate (4-NPAc). Does not bind cellulose, cellohexaose and beta-glucan. The polypeptide is Acetylxylan esterase / glucomannan deacetylase (Cellvibrio japonicus (strain Ueda107) (Pseudomonas fluorescens subsp. cellulosa)).